The primary structure comprises 71 residues: Prokaryotic ubiquitin-like protein Pup (71 aa).

Positions 1-18 (MATRDSGGQSQTGRSQQG) are enriched in low complexity. A disordered region spans residues 1–42 (MATRDSGGQSQTGRSQQGEEIEDVTTEASAEAAERHAEITED). The ARC ATPase binding stretch occupies residues 27 to 65 (EASAEAAERHAEITEDVDDLLDEIDSVLEENAEEFVRGY). A coiled-coil region spans residues 29 to 60 (SAEAAERHAEITEDVDDLLDEIDSVLEENAEE). An Isoglutamyl lysine isopeptide (Glu-Lys) (interchain with K-? in acceptor proteins) cross-link involves residue Glu-71.

It belongs to the prokaryotic ubiquitin-like protein family. As to quaternary structure, strongly interacts with the proteasome-associated ATPase ARC through a hydrophobic interface; the interacting region of Pup lies in its C-terminal half. There is one Pup binding site per ARC hexamer ring.

It functions in the pathway protein degradation; proteasomal Pup-dependent pathway. Protein modifier that is covalently attached to lysine residues of substrate proteins, thereby targeting them for proteasomal degradation. The tagging system is termed pupylation. This chain is Prokaryotic ubiquitin-like protein Pup, found in Salinispora tropica (strain ATCC BAA-916 / DSM 44818 / JCM 13857 / NBRC 105044 / CNB-440).